A 230-amino-acid polypeptide reads, in one-letter code: Octanoyltransferase (230 aa).

Positions 31–230 (PETPDELWIC…GDKLTRYLAP (200 aa)) constitute a BPL/LPL catalytic domain. Substrate-binding positions include 70-77 (RGGQVTYH), 163-165 (ALG), and 176-178 (GVA). The active-site Acyl-thioester intermediate is cysteine 194.

Belongs to the LipB family.

It is found in the cytoplasm. It catalyses the reaction octanoyl-[ACP] + L-lysyl-[protein] = N(6)-octanoyl-L-lysyl-[protein] + holo-[ACP] + H(+). The protein operates within protein modification; protein lipoylation via endogenous pathway; protein N(6)-(lipoyl)lysine from octanoyl-[acyl-carrier-protein]: step 1/2. Its function is as follows. Catalyzes the transfer of endogenously produced octanoic acid from octanoyl-acyl-carrier-protein onto the lipoyl domains of lipoate-dependent enzymes. Lipoyl-ACP can also act as a substrate although octanoyl-ACP is likely to be the physiological substrate. The protein is Octanoyltransferase of Albidiferax ferrireducens (strain ATCC BAA-621 / DSM 15236 / T118) (Rhodoferax ferrireducens).